Here is an 832-residue protein sequence, read N- to C-terminus: Prickle-like protein 1 (832 aa).

One can recognise a PET domain in the interval 14–122 (FGCQRSSTSD…TIKLLSRAVM (109 aa)). LIM zinc-binding domains follow at residues 124–188 (AVCE…ELLK), 189–249 (PRCS…LYAE), and 250–313 (YCET…EDIH). A disordered region spans residues 314–342 (ASDSSDSAFQSARSRDSRRSVRMGRSSRS). Phosphoserine is present on residues S315, S592, and S595. 2 disordered regions span residues 663–688 (HFEE…DNAL) and 765–832 (SSST…CIIS). Residues 670 to 681 (RPHHHRHRRSRK) are compositionally biased toward basic residues. Residue S684 is modified to Phosphoserine. A compositionally biased stretch (polar residues) spans 798-815 (DLSSPASALPTPQFTQRT). Basic residues predominate over residues 816 to 832 (TKSKKKKGHKGKNCIIS). Position 829 is a cysteine methyl ester (C829). A lipid anchor (S-farnesyl cysteine) is attached at C829. A propeptide spans 830 to 832 (IIS) (removed in mature form).

Belongs to the prickle / espinas / testin family. As to quaternary structure, interacts with REST.

The protein localises to the nucleus membrane. It localises to the cytoplasm. It is found in the cytosol. Functionally, involved in the planar cell polarity pathway that controls convergent extension during gastrulation and neural tube closure. Convergent extension is a complex morphogenetic process during which cells elongate, move mediolaterally, and intercalate between neighboring cells, leading to convergence toward the mediolateral axis and extension along the anteroposterior axis. Necessary for nuclear localization of REST. May serve as nuclear receptor. This Mus musculus (Mouse) protein is Prickle-like protein 1 (Prickle1).